Reading from the N-terminus, the 92-residue chain is Large ribosomal subunit protein eL43 (92 aa).

Zn(2+)-binding residues include Cys39, Cys42, Cys57, and Cys60. The C4-type zinc finger occupies 39–60; sequence CPVCGFPKLKRASTSIWVCGKC.

The protein belongs to the eukaryotic ribosomal protein eL43 family. Putative zinc-binding subfamily. As to quaternary structure, part of the 50S ribosomal subunit. The cofactor is Zn(2+).

Its function is as follows. Binds to the 23S rRNA. This Methanocaldococcus jannaschii (strain ATCC 43067 / DSM 2661 / JAL-1 / JCM 10045 / NBRC 100440) (Methanococcus jannaschii) protein is Large ribosomal subunit protein eL43.